The primary structure comprises 347 residues: Selenide, water dikinase (347 aa).

The active site involves U17. U17 is a non-standard amino acid (selenocysteine). Residues K20 and 48–50 contribute to the ATP site; that span reads TAD. D51 contacts Mg(2+). ATP contacts are provided by residues D68, D91, and 139–141; that span reads GHS. Residue D91 participates in Mg(2+) binding. A Mg(2+)-binding site is contributed by D227.

Belongs to the selenophosphate synthase 1 family. Class I subfamily. Homodimer. Requires Mg(2+) as cofactor.

The catalysed reaction is hydrogenselenide + ATP + H2O = selenophosphate + AMP + phosphate + 2 H(+). Its function is as follows. Synthesizes selenophosphate from selenide and ATP. In Haemophilus influenzae (strain 86-028NP), this protein is Selenide, water dikinase.